Reading from the N-terminus, the 548-residue chain is Chaperonin GroEL (548 aa).

Residues 30–33, K51, 87–91, G415, 479–481, and D495 each bind ATP; these read TLGP, DGTTT, and NAA.

This sequence belongs to the chaperonin (HSP60) family. In terms of assembly, forms a cylinder of 14 subunits composed of two heptameric rings stacked back-to-back. Interacts with the co-chaperonin GroES.

It localises to the cytoplasm. The enzyme catalyses ATP + H2O + a folded polypeptide = ADP + phosphate + an unfolded polypeptide.. Its function is as follows. Together with its co-chaperonin GroES, plays an essential role in assisting protein folding. The GroEL-GroES system forms a nano-cage that allows encapsulation of the non-native substrate proteins and provides a physical environment optimized to promote and accelerate protein folding. This chain is Chaperonin GroEL, found in Salmonella gallinarum (strain 287/91 / NCTC 13346).